Consider the following 67-residue polypeptide: Large ribosomal subunit protein uL29 (67 aa).

The protein belongs to the universal ribosomal protein uL29 family.

The sequence is that of Large ribosomal subunit protein uL29 from Solibacter usitatus (strain Ellin6076).